Consider the following 290-residue polypeptide: Pre-mRNA-splicing factor cwf20 (290 aa).

Disordered regions lie at residues 1-61 (MSLV…KSSF) and 114-134 (PNNS…KKST). The span at 114–128 (PNNSVSDLTSTGSSE) shows a compositional bias: polar residues.

As to quaternary structure, belongs to the 40S cdc5-associated complex (or cwf complex), a spliceosome sub-complex reminiscent of a late-stage spliceosome composed of the U2, U5 and U6 snRNAs and at least brr2, cdc5, cwf2/prp3, cwf3/syf1, cwf4/syf3, cwf5/ecm2, spp42/cwf6, cwf7/spf27, cwf8, cwf9, cwf10, cwf11, cwf12, prp45/cwf13, cwf14, cwf15, cwf16, cwf17, cwf18, cwf19, cwf20, cwf21, cwf22, cwf23, cwf24, cwf25, cwf26, cyp7/cwf27, cwf28, cwf29/ist3, lea1, msl1, prp5/cwf1, prp10, prp12/sap130, prp17, prp22, sap61, sap62, sap114, sap145, slu7, smb1, smd1, smd3, smf1, smg1 and syf2.

It is found in the nucleus. Its function is as follows. Involved in mRNA splicing where it associates with cdc5 and the other cwf proteins as part of the spliceosome. In Schizosaccharomyces pombe (strain 972 / ATCC 24843) (Fission yeast), this protein is Pre-mRNA-splicing factor cwf20 (cwf20).